We begin with the raw amino-acid sequence, 121 residues long: Fluoride-specific ion channel FluC (121 aa).

The next 4 helical transmembrane spans lie at 5 to 25 (LLIF…TISI), 33 to 53 (FPWG…VFYT), 66 to 83 (LMLT…STFS), and 98 to 118 (FFTY…LGIW). 2 residues coordinate Na(+): Gly74 and Thr77.

Belongs to the fluoride channel Fluc/FEX (TC 1.A.43) family.

The protein resides in the cell inner membrane. It carries out the reaction fluoride(in) = fluoride(out). Its activity is regulated as follows. Na(+) is not transported, but it plays an essential structural role and its presence is essential for fluoride channel function. Functionally, fluoride-specific ion channel. Important for reducing fluoride concentration in the cell, thus reducing its toxicity. The protein is Fluoride-specific ion channel FluC of Phocaeicola vulgatus (strain ATCC 8482 / DSM 1447 / JCM 5826 / CCUG 4940 / NBRC 14291 / NCTC 11154) (Bacteroides vulgatus).